Here is a 145-residue protein sequence, read N- to C-terminus: Lysozyme-like protein 4 (145 aa).

Positions 1–19 (MQLYLVLLLISYLLTPIGA) are cleaved as a signal peptide. Positions 20–145 (SILGRCVVAK…LDRWLDGCEL (126 aa)) constitute a C-type lysozyme domain. Intrachain disulfides connect C25–C143, C49–C130, C84–C95, and C91–C109. E54 is a catalytic residue.

This sequence belongs to the glycosyl hydrolase 22 family. As to quaternary structure, monomer. As to expression, expressed in the brain, lung, ovary, uterus and testis. In testis expressed in the germinal epithelium and on the maturing spermatozoa (at protein level).

The protein resides in the secreted. Its subcellular location is the cytoplasmic vesicle. The protein localises to the secretory vesicle. It is found in the acrosome. It localises to the cell projection. The protein resides in the cilium. Its subcellular location is the flagellum. Its function is as follows. May be involved in fertilization. Has no detectable bacteriolytic and lysozyme activities in vitro. The protein is Lysozyme-like protein 4 (Lyzl4) of Rattus norvegicus (Rat).